The chain runs to 328 residues: Trans-O-hydroxybenzylidenepyruvate hydratase-aldolase (328 aa).

Belongs to the DapA family. In terms of assembly, homotrimer.

The catalysed reaction is (3E)-4-(2-hydroxyphenyl)-2-oxobut-3-enoate + H2O = salicylaldehyde + pyruvate. The protein operates within aromatic compound metabolism; naphthalene degradation. With respect to regulation, inhibited bye p-chloromercuribenzoate and salicylaldehyde. Activated by salicylate. Its function is as follows. Involved in the naphthalene and naphthalenesulfonate catabolic pathway. Catalyzes the transformation of trans-O-hydroxybenzylidenepyruvate (THBPA) to salicylaldehyde and pyruvate. The reaction is reversible. Can also use 2,4-dihydroxybenzalpyruvate (2,4-DHBP) and 2,6-dihydroxybenzalpyruvate (2,6-DHBP). This chain is Trans-O-hydroxybenzylidenepyruvate hydratase-aldolase (nsaE), found in Sphingobium xenophagum.